Consider the following 375-residue polypeptide: Alcohol dehydrogenase 1A (375 aa).

Ser-2 is subject to N-acetylserine. Ser-23 is subject to Phosphoserine. Tyr-35 is subject to Phosphotyrosine. Cys-47 lines the Zn(2+) pocket. Residue 48–52 (GTDDH) participates in NAD(+) binding. Zn(2+)-binding residues include His-68, Cys-98, Cys-101, Cys-104, Cys-112, and Cys-175. Residues 200-205 (GLGGVG), Asp-224, Lys-229, Ile-270, 293-295 (VGV), 318-320 (AVY), and Arg-370 each bind NAD(+).

The protein belongs to the zinc-containing alcohol dehydrogenase family. Dimer of identical or heterodimer of closely related subunits alpha, beta, or gamma that are encoded by genes ADH1A, ADH1B, and ADH1C, respectively. The cofactor is Zn(2+).

The protein localises to the cytoplasm. The catalysed reaction is a primary alcohol + NAD(+) = an aldehyde + NADH + H(+). It carries out the reaction a secondary alcohol + NAD(+) = a ketone + NADH + H(+). The enzyme catalyses butan-1-ol + NAD(+) = butanal + NADH + H(+). It catalyses the reaction 1-propanol + NAD(+) = propanal + NADH + H(+). The catalysed reaction is propan-2-ol + NAD(+) = acetone + NADH + H(+). Its function is as follows. Alcohol dehydrogenase. Oxidizes primary as well as secondary alcohols. Ethanol is a very poor substrate. The protein is Alcohol dehydrogenase 1A (ADH1A) of Macaca mulatta (Rhesus macaque).